The following is an 82-amino-acid chain: MAFGAGGGGRRPFFRRRKTCPFSGPNAPKIDYKDVKLLSRYVSERGKIVPSRITAVSAKKQRELAQAIKRARFLGFLPYVIR.

Belongs to the bacterial ribosomal protein bS18 family. In terms of assembly, part of the 30S ribosomal subunit. Forms a tight heterodimer with protein bS6.

Functionally, binds as a heterodimer with protein bS6 to the central domain of the 16S rRNA, where it helps stabilize the platform of the 30S subunit. The protein is Small ribosomal subunit protein bS18 of Methylobacterium nodulans (strain LMG 21967 / CNCM I-2342 / ORS 2060).